The sequence spans 57 residues: Lantibiotic nisin-Z (57 aa).

The propeptide occupies 1–23 (MSTKDFNLDLVSVSKKDSGASPR). Position 25 is a 2,3-didehydrobutyrine (T25). The segment at residues 26–30 (SISLC) is a cross-link (lanthionine (Ser-Cys)). S28 is modified (2,3-didehydroalanine (Ser)). 4 cross-links (beta-methyllanthionine (Thr-Cys)) span residues 31-34 (TPGC), 36-42 (TGALMGC), 46-49 (TATC), and 48-51 (TCNC). Position 56 is a 2,3-didehydroalanine (Ser) (S56).

It belongs to the type A lantibiotic family. In terms of processing, maturation of lantibiotics involves the enzymatic conversion of Thr, and Ser into dehydrated AA and the formation of thioether bonds with cysteine. This is followed by membrane translocation and cleavage of the modified precursor. Post-translationally, the structure of the 2,3-didehydrobutyrine is not discussed in PubMed:15361862. It is probably the Z-isomer by similarity.

Lanthionine-containing peptide antibiotic (lantibiotic) active on Gram-positive bacteria. The bactericidal activity of lantibiotics is based on depolarization of energized bacterial cytoplasmic membranes, initiated by the formation of aqueous transmembrane pores. The polypeptide is Lantibiotic nisin-Z (nisZ) (Lactococcus lactis subsp. lactis (Streptococcus lactis)).